A 353-amino-acid polypeptide reads, in one-letter code: Methionine import ATP-binding protein MetN (353 aa).

The ABC transporter domain occupies Leu-6–Val-249. Gly-41 to Ser-48 lines the ATP pocket.

Belongs to the ABC transporter superfamily. Methionine importer (TC 3.A.1.24) family. In terms of assembly, the complex is composed of two ATP-binding proteins (MetN), two transmembrane proteins (MetI) and a solute-binding protein (MetQ).

It localises to the cell membrane. The catalysed reaction is L-methionine(out) + ATP + H2O = L-methionine(in) + ADP + phosphate + H(+). It catalyses the reaction D-methionine(out) + ATP + H2O = D-methionine(in) + ADP + phosphate + H(+). In terms of biological role, part of the ABC transporter complex MetNIQ involved in methionine import. Responsible for energy coupling to the transport system. The polypeptide is Methionine import ATP-binding protein MetN (Lactobacillus acidophilus (strain ATCC 700396 / NCK56 / N2 / NCFM)).